Consider the following 86-residue polypeptide: Small ribosomal subunit protein bS20 (86 aa).

Residues 1 to 25 are disordered; sequence MANIKSQQKRNKTNERARLRNKSVK.

It belongs to the bacterial ribosomal protein bS20 family.

Functionally, binds directly to 16S ribosomal RNA. This Mycobacterium avium (strain 104) protein is Small ribosomal subunit protein bS20.